Here is a 27-residue protein sequence, read N- to C-terminus: M-lycotoxin-Hc2a (27 aa).

As to expression, expressed by the venom gland.

The protein localises to the secreted. Its function is as follows. Forms pore that permeabilize the cell membrane. Promotes efflux of calcium from synaptosomes, causes hemolysis, and dissipates voltage gradients across muscle membrane. Potently inhibits the growth of bacteria, yeast and Leishmania. May function both in the prey capture strategy as well as protection from infectious organisms arising from prey ingestion. In Hogna carolinensis (Carolina wolf spider), this protein is M-lycotoxin-Hc2a.